Reading from the N-terminus, the 492-residue chain is Probable Xaa-Pro aminopeptidase AO090005001240 (492 aa).

Mn(2+) is bound by residues Asp272, Asp283, Glu420, and Glu459.

The protein belongs to the peptidase M24B family. Requires Mn(2+) as cofactor.

It carries out the reaction Release of any N-terminal amino acid, including proline, that is linked to proline, even from a dipeptide or tripeptide.. In terms of biological role, catalyzes the removal of a penultimate prolyl residue from the N-termini of peptides. The sequence is that of Probable Xaa-Pro aminopeptidase AO090005001240 from Aspergillus oryzae (strain ATCC 42149 / RIB 40) (Yellow koji mold).